The primary structure comprises 618 residues: uncharacterized protein (618 aa).

The segment at residues 18-47 (SCQRCRQRKIKCDRLHPCFQCVKSNSQCFY) is a DNA-binding region (zn(2)-C6 fungal-type). Residue serine 598 is modified to Phosphoserine.

The protein localises to the nucleus. This is an uncharacterized protein from Schizosaccharomyces pombe (strain 972 / ATCC 24843) (Fission yeast).